Reading from the N-terminus, the 324-residue chain is 1-deoxyxylulose-5-phosphate synthase YajO (324 aa).

The active-site Proton donor is Tyr61.

This sequence belongs to the aldo/keto reductase family. Aldo/keto reductase 2 subfamily.

The catalysed reaction is D-ribulose 5-phosphate + AH2 = 1-deoxy-D-xylulose 5-phosphate + A + H2O. Its activity is regulated as follows. NADH, NADPH or ATP do not increase activity. Functionally, catalyzes the conversion of ribulose 5-phosphate (Ru5P) to 1-deoxy-D-xylulose 5-phosphate (DXP), providing a direct route from pentoses to terpenes. May play a role in biosynthesis of DXP under conditions of thiamine starvation. This is 1-deoxyxylulose-5-phosphate synthase YajO (yajO) from Escherichia coli (strain K12).